The chain runs to 301 residues: tRNA dimethylallyltransferase (301 aa).

9-16 (GPTASGKS) lines the ATP pocket. 11-16 (TASGKS) lines the substrate pocket. The tract at residues 34 to 37 (DSMQ) is interaction with substrate tRNA.

It belongs to the IPP transferase family. As to quaternary structure, monomer. It depends on Mg(2+) as a cofactor.

The catalysed reaction is adenosine(37) in tRNA + dimethylallyl diphosphate = N(6)-dimethylallyladenosine(37) in tRNA + diphosphate. In terms of biological role, catalyzes the transfer of a dimethylallyl group onto the adenine at position 37 in tRNAs that read codons beginning with uridine, leading to the formation of N6-(dimethylallyl)adenosine (i(6)A). The chain is tRNA dimethylallyltransferase from Corynebacterium glutamicum (strain R).